The following is a 238-amino-acid chain: MKLPNEIEEYLVSRNFSENTRSNYYYDLVYLQAFFEDKSVTQEALELYKHQLSKLSPAAQRRKISSANQYFLFLYENKKINQFFKIKQVVQKKTQSSESYHPMIKEFPEFYGPLSCPGQFLALLILEFGLNFAEIQKLKWENFNWNFKYLTIEKAGIKRVLPIREKFAIRVKAIKNADELFAKSRQFLYTELKKFTNYSSKEIREQYILHQVKAGKTIYELANLLGLSTITALEKYYR.

One can recognise a Core-binding (CB) domain in the interval 1–75; it reads MKLPNEIEEY…SANQYFLFLY (75 aa). Positions 90–238 constitute a Tyr recombinase domain; the sequence is VQKKTQSSES…TITALEKYYR (149 aa). Catalysis depends on residues Lys154 and Arg204. Tyr236 acts as the O-(3'-phospho-DNA)-tyrosine intermediate in catalysis.

The protein belongs to the 'phage' integrase family. XerD-like subfamily.

It localises to the cytoplasm. Functionally, putative tyrosine recombinase. Not involved in the cutting and rejoining of the recombining DNA molecules on dif(SL) site. The polypeptide is Tyrosine recombinase XerD-like (Lactococcus lactis subsp. cremoris (strain SK11)).